We begin with the raw amino-acid sequence, 783 residues long: Probable phosphoketolase (783 aa).

Belongs to the XFP family. Requires thiamine diphosphate as cofactor.

This chain is Probable phosphoketolase, found in Rhodopseudomonas palustris (strain TIE-1).